We begin with the raw amino-acid sequence, 1697 residues long: SAC3 family protein B (1697 aa).

4 disordered regions span residues 54–134 (PPAS…QPGG), 167–280 (QRPN…SRSN), 306–413 (EATR…EQAR), and 491–512 (ESER…VDGD). Residues 120-134 (QNPSPSSGQPYQPGG) are compositionally biased toward low complexity. A compositionally biased stretch (basic and acidic residues) spans 178 to 192 (DGSRNFLKDHGEHSR). Residues 193–202 (ATSPPATSHI) are compositionally biased toward polar residues. Basic and acidic residues predominate over residues 215–227 (RSQDSKRKSRSDI). Composition is skewed to polar residues over residues 233–243 (MGFSRRNQSPV), 257–280 (PLSS…SRSN), and 335–380 (RFST…SPAT). The PCI domain maps to 625 to 813 (NIEQMNKTSV…KCSKLVHMKK (189 aa)).

It belongs to the SAC3 family. As to quaternary structure, interacts with SAC3A, EER5 and CML19. Interacts with UCH1 and UCH2.

It localises to the nucleus. Component of the TREX-2 complex (transcription and export complex 2), a muliprotein complex that functions in docking export-competent ribonucleoprotein particles (mRNPs) to the nuclear entrance of the nuclear pore complex (nuclear basket). TREX-2 participates in mRNA export and accurate chromatin positioning in the nucleus by tethering genes to the nuclear periphery. The chain is SAC3 family protein B from Arabidopsis thaliana (Mouse-ear cress).